Here is a 302-residue protein sequence, read N- to C-terminus: D-alanine--D-alanine ligase B (302 aa).

Positions Lys-99 to Glu-294 constitute an ATP-grasp domain. Ile-126–Thr-181 is a binding site for ATP. Positions 248, 261, and 263 each coordinate Mg(2+).

This sequence belongs to the D-alanine--D-alanine ligase family. The cofactor is Mg(2+). Mn(2+) is required as a cofactor.

It localises to the cytoplasm. It catalyses the reaction 2 D-alanine + ATP = D-alanyl-D-alanine + ADP + phosphate + H(+). It functions in the pathway cell wall biogenesis; peptidoglycan biosynthesis. In terms of biological role, cell wall formation. In Clostridium perfringens (strain 13 / Type A), this protein is D-alanine--D-alanine ligase B.